Consider the following 442-residue polypeptide: tRNA modification GTPase MnmE (442 aa).

Residues Arg-27, Glu-84, and Lys-124 each coordinate (6S)-5-formyl-5,6,7,8-tetrahydrofolate. One can recognise a TrmE-type G domain in the interval 221–366 (GLHVVIVGAP…LLDALQAFAE (146 aa)). GTP contacts are provided by residues 231–236 (NAGKSS), 250–256 (SEEAGTT), and 275–278 (DTAG). Residues Ser-235 and Thr-256 each contribute to the Mg(2+) site. (6S)-5-formyl-5,6,7,8-tetrahydrofolate is bound at residue Lys-442.

The protein belongs to the TRAFAC class TrmE-Era-EngA-EngB-Septin-like GTPase superfamily. TrmE GTPase family. As to quaternary structure, homodimer. Heterotetramer of two MnmE and two MnmG subunits. K(+) serves as cofactor.

It localises to the cytoplasm. Functionally, exhibits a very high intrinsic GTPase hydrolysis rate. Involved in the addition of a carboxymethylaminomethyl (cmnm) group at the wobble position (U34) of certain tRNAs, forming tRNA-cmnm(5)s(2)U34. This Brucella abortus (strain 2308) protein is tRNA modification GTPase MnmE.